The sequence spans 25 residues: Metallothionein (25 aa).

The Cu(+) site is built by C3, C5, C11, C13, C18, C20, and C23.

This sequence belongs to the metallothionein superfamily. Type 8 family.

In terms of biological role, the metallothioneins are involved in the cellular sequestration of toxic metal ions. Binds six copper (cuprous) ions. The sequence is that of Metallothionein from Agaricus bisporus (White button mushroom).